Reading from the N-terminus, the 195-residue chain is Large ribosomal subunit protein eL18 (195 aa).

Lys-126 participates in a covalent cross-link: Glycyl lysine isopeptide (Lys-Gly) (interchain with G-Cter in SUMO2). Ser-137 bears the Phosphoserine mark. Residues 158–195 (HFGKAPGTPHSHTKPYVRSKGRKFERARGRRASRGYKN) are disordered. Thr-165 carries the post-translational modification Phosphothreonine. 2 stretches are compositionally biased toward basic residues: residues 168 to 178 (SHTKPYVRSKG) and 185 to 195 (RGRRASRGYKN). A Glycyl lysine isopeptide (Lys-Gly) (interchain with G-Cter in SUMO2) cross-link involves residue Lys-171.

Belongs to the eukaryotic ribosomal protein eL18 family. In terms of assembly, component of the large ribosomal subunit.

Its subcellular location is the cytoplasm. It is found in the cytosol. The protein resides in the rough endoplasmic reticulum. Its function is as follows. Component of the large ribosomal subunit. The polypeptide is Large ribosomal subunit protein eL18 (RPL18) (Sus scrofa (Pig)).